We begin with the raw amino-acid sequence, 93 residues long: Large ribosomal subunit protein bL27 (93 aa).

Residues 1–9 (MIKINLQLF) constitute a propeptide that is removed on maturation.

This sequence belongs to the bacterial ribosomal protein bL27 family. Post-translationally, the N-terminus is cleaved by ribosomal processing cysteine protease Prp.

This chain is Large ribosomal subunit protein bL27, found in Ruminiclostridium cellulolyticum (strain ATCC 35319 / DSM 5812 / JCM 6584 / H10) (Clostridium cellulolyticum).